The following is a 317-amino-acid chain: Proline-rich protein 2 (317 aa).

Positions 1 to 16 are cleaved as a signal peptide; it reads MLVVLFTVALLALSSA. The disordered stretch occupies residues 15-317; sequence SAQGPREELQ…PPQGRPQGPQ (303 aa). Positions 32–44 are enriched in pro residues; that stretch reads QRPPPSGSQPRPP. Asn-46 carries N-linked (GlcNAc...) asparagine glycosylation. Composition is skewed to pro residues over residues 51 to 183 and 204 to 288; these read GPPP…PPAG and QSPP…PTQG. Residues 289-305 show a composition bias toward low complexity; that stretch reads PHPTGGPQQTPPLAGNP. Residues 306–317 are compositionally biased toward pro residues; it reads QGPPQGRPQGPQ.

Its subcellular location is the secreted. The sequence is that of Proline-rich protein 2 (Prp2) from Mus musculus (Mouse).